The primary structure comprises 447 residues: Peptide-N(4)-(N-acetyl-beta-glucosaminyl)asparagine amidase (447 aa).

Zn(2+) is bound by residues C209, C212, C241, and C244. Catalysis depends on C267, which acts as the Nucleophile. Residues H294 and D311 contribute to the active site.

It belongs to the transglutaminase-like superfamily. PNGase family. Requires Zn(2+) as cofactor.

It localises to the cytoplasm. The enzyme catalyses Hydrolysis of an N(4)-(acetyl-beta-D-glucosaminyl)asparagine residue in which the glucosamine residue may be further glycosylated, to yield a (substituted) N-acetyl-beta-D-glucosaminylamine and a peptide containing an aspartate residue.. Its function is as follows. Specifically deglycosylates the denatured form of N-linked glycoproteins in the cytoplasm and assists their proteasome-mediated degradation. Cleaves the beta-aspartyl-glucosamine (GlcNAc) of the glycan and the amide side chain of Asn, converting Asn to Asp. Prefers proteins containing high-mannose over those bearing complex type oligosaccharides. Can recognize misfolded proteins in the endoplasmic reticulum that are exported to the cytosol to be destroyed and deglycosylate them, while it has no activity toward native proteins. Deglycosylation is a prerequisite for subsequent proteasome-mediated degradation of some, but not all, misfolded glycoproteins. The sequence is that of Peptide-N(4)-(N-acetyl-beta-glucosaminyl)asparagine amidase (PNG1) from Oryza sativa subsp. japonica (Rice).